Reading from the N-terminus, the 347-residue chain is GMP reductase (347 aa).

NADP(+) is bound at residue 108–131 (ADFQKTKDIMALTDDLIFICIDIA). Residues Gly-181 and Gly-183 each contribute to the K(+) site. The Thioimidate intermediate role is filled by Cys-186. An NADP(+)-binding site is contributed by 216–239 (IIGDGGCSCAGDVSKAFGGGADFV).

Belongs to the IMPDH/GMPR family. GuaC type 1 subfamily. Homotetramer.

The enzyme catalyses IMP + NH4(+) + NADP(+) = GMP + NADPH + 2 H(+). In terms of biological role, catalyzes the irreversible NADPH-dependent deamination of GMP to IMP. It functions in the conversion of nucleobase, nucleoside and nucleotide derivatives of G to A nucleotides, and in maintaining the intracellular balance of A and G nucleotides. In Aliivibrio fischeri (strain ATCC 700601 / ES114) (Vibrio fischeri), this protein is GMP reductase.